The chain runs to 84 residues: uncharacterized protein (84 aa).

This is an uncharacterized protein from Methanocaldococcus jannaschii (strain ATCC 43067 / DSM 2661 / JAL-1 / JCM 10045 / NBRC 100440) (Methanococcus jannaschii).